A 318-amino-acid chain; its full sequence is L-lactate dehydrogenase (318 aa).

NAD(+)-binding residues include Val14, Asp35, Lys40, and Tyr66. Residues Arg89 and 121-124 contribute to the substrate site; that span reads NPVD. An NAD(+)-binding site is contributed by Ser144. Residue 149–152 coordinates substrate; the sequence is DTAR. Catalysis depends on His176, which acts as the Proton acceptor. Tyr220 bears the Phosphotyrosine mark. Thr229 lines the substrate pocket.

It belongs to the LDH/MDH superfamily. LDH family. Homotetramer.

Its subcellular location is the cytoplasm. It catalyses the reaction (S)-lactate + NAD(+) = pyruvate + NADH + H(+). The protein operates within fermentation; pyruvate fermentation to lactate; (S)-lactate from pyruvate: step 1/1. Its function is as follows. Catalyzes the conversion of lactate to pyruvate. The protein is L-lactate dehydrogenase of Staphylococcus haemolyticus (strain JCSC1435).